Consider the following 747-residue polypeptide: Endoglucanase D (747 aa).

The signal sequence occupies residues M1–A39. E208 serves as the catalytic Proton donor. The Nucleophile role is filled by E349. A disordered region spans residues A456 to S475. 2 Fibronectin type-III domains span residues A456–G543 and V552–D639. Over residues P465–S475 the composition is skewed to polar residues. Positions P638–R747 constitute a CBM2 domain.

It belongs to the glycosyl hydrolase 5 (cellulase A) family.

It catalyses the reaction Endohydrolysis of (1-&gt;4)-beta-D-glucosidic linkages in cellulose, lichenin and cereal beta-D-glucans.. It functions in the pathway glycan metabolism; cellulose degradation. The chain is Endoglucanase D (cenD) from Cellulomonas fimi.